A 250-amino-acid polypeptide reads, in one-letter code: Anti-sigma-L factor RslA (250 aa).

At 1-115 (MTMPLRGLGP…VHRRRRRTRL (115 aa)) the chain is on the cytoplasmic side. A helical transmembrane segment spans residues 116–136 (ITWVASSAAAAVLAIGVLVGV). The Extracellular segment spans residues 137–250 (QGHSAAPQRA…TGQVLLQRSL (114 aa)).

In terms of assembly, interacts with ECF RNA polymerase sigma factor SigL; this should inhibit the interaction of SigL with the RNA polymerase catalytic core. In terms of processing, probably cleaved within the membrane by Rip1 near the cytoplasmic membrane interface.

The protein resides in the cell membrane. An anti-sigma factor for extracytoplasmic function (ECF) sigma factor SigL. ECF sigma factors are held in an inactive form by an anti-sigma factor until released by regulated intramembrane proteolysis (RIP). RIP occurs when an extracytoplasmic signal triggers a concerted proteolytic cascade to transmit information and elicit cellular responses. The membrane-spanning regulatory substrate protein is first cut extracytoplasmically (site-1 protease, S1P), then within the membrane itself (site-2 protease, S2P, Rip1), while cytoplasmic proteases finish degrading the regulatory protein, liberating the sigma factor. This is Anti-sigma-L factor RslA (rslA) from Mycobacterium tuberculosis (strain ATCC 35801 / TMC 107 / Erdman).